The primary structure comprises 229 residues: Flagellar calcium-binding protein TB-1.7G (229 aa).

The tract at residues 1-25 (GSKNASNPKDGAASKGGKDGKTTAD) is disordered. Positions 16-25 (GGKDGKTTAD) are enriched in basic and acidic residues. EF-hand domains follow at residues 44-79 (ESKSRRIELFKQFDTNGTGKLGFREVLDGCYGILKL), 80-115 (DEFTTHLPDIVQRAFDKAKDLGNKVKGVGEEDLVEF), 126-161 (YDIFELTVMFDTMDKDGSLLLELQEFKEALPKLKEW), and 163-198 (VDITDATTVFNEIDTNGSGVVTFDEFSCWAVTKKLQ). Residues aspartate 57, asparagine 59, threonine 61, lysine 63, and glutamate 68 each coordinate Ca(2+). Aspartate 139, aspartate 141, serine 143, glutamate 150, aspartate 176, asparagine 178, serine 180, and glutamate 187 together coordinate Ca(2+). The interval 202-229 (DPDDEENGANEGDGANAGDGVPAAEGSA) is disordered. Residues 210–221 (ANEGDGANAGDG) show a composition bias toward low complexity.

Belongs to the calflagin family.

It localises to the cell projection. The protein localises to the cilium. The protein resides in the flagellum. Functionally, may contribute to the rapid motility of the trypanosomes, playing a role either in flagellar structure or in calcium metabolism. Could alternate between a GDP-bound inactive form to a calcium/GTP-bound active form. In Trypanosoma brucei brucei, this protein is Flagellar calcium-binding protein TB-1.7G.